Here is a 376-residue protein sequence, read N- to C-terminus: NIF3-like protein 1 (376 aa).

At Lys108 the chain carries N6-acetyllysine. The segment at 243-376 (LLLHTGMGRL…ETDRDPLRVV (134 aa)) is mediates interaction with COPS2. Position 254 is a phosphothreonine (Thr254). Position 258 is a phosphoserine (Ser258).

This sequence belongs to the GTP cyclohydrolase I type 2/NIF3 family. In terms of assembly, homodimer. Interacts with COPS2. Interacts with THOC7.

The protein localises to the cytoplasm. It localises to the nucleus. May function as a transcriptional corepressor through its interaction with COPS2, negatively regulating the expression of genes involved in neuronal differentiation. This chain is NIF3-like protein 1, found in Rattus norvegicus (Rat).